A 224-amino-acid polypeptide reads, in one-letter code: Prothoracicotropic hormone (224 aa).

Residues 1–29 form the signal peptide; the sequence is MITRPIILVILCYAILMIVQSFVPKAVAL. Disulfide bonds link C132–C169, C155–C211, and C163–C213. An N-linked (GlcNAc...) asparagine glycan is attached at N156.

Homodimer; disulfide-linked. In terms of tissue distribution, PTTH is synthesized by two dorsolateral neurosecretory cells of the Bombyx brain.

Its function is as follows. PTTH is a brain secretory polypeptide of insects which stimulates the prothoracic glands to produce and release ecdysone, the steroid essential to insect development. In terms of biological role, peptides P2K and P6K are presumed to be cleaved post-translationally and may play some unknown physiologically or developmentally important functions. This chain is Prothoracicotropic hormone, found in Bombyx mori (Silk moth).